Consider the following 891-residue polypeptide: DNA mismatch repair protein MutS (891 aa).

Position 632–639 (632–639) interacts with ATP; the sequence is GPNMAGKS.

This sequence belongs to the DNA mismatch repair MutS family.

Functionally, this protein is involved in the repair of mismatches in DNA. It is possible that it carries out the mismatch recognition step. This protein has a weak ATPase activity. This is DNA mismatch repair protein MutS from Rhodopirellula baltica (strain DSM 10527 / NCIMB 13988 / SH1).